The following is a 286-amino-acid chain: Phosphatidylserine decarboxylase proenzyme (286 aa).

Active-site charge relay system; for autoendoproteolytic cleavage activity residues include Asp-90, His-147, and Ser-252. The active-site Schiff-base intermediate with substrate; via pyruvic acid; for decarboxylase activity is Ser-252. At Ser-252 the chain carries Pyruvic acid (Ser); by autocatalysis.

Belongs to the phosphatidylserine decarboxylase family. PSD-B subfamily. Prokaryotic type I sub-subfamily. As to quaternary structure, heterodimer of a large membrane-associated beta subunit and a small pyruvoyl-containing alpha subunit. It depends on pyruvate as a cofactor. Post-translationally, is synthesized initially as an inactive proenzyme. Formation of the active enzyme involves a self-maturation process in which the active site pyruvoyl group is generated from an internal serine residue via an autocatalytic post-translational modification. Two non-identical subunits are generated from the proenzyme in this reaction, and the pyruvate is formed at the N-terminus of the alpha chain, which is derived from the carboxyl end of the proenzyme. The autoendoproteolytic cleavage occurs by a canonical serine protease mechanism, in which the side chain hydroxyl group of the serine supplies its oxygen atom to form the C-terminus of the beta chain, while the remainder of the serine residue undergoes an oxidative deamination to produce ammonia and the pyruvoyl prosthetic group on the alpha chain. During this reaction, the Ser that is part of the protease active site of the proenzyme becomes the pyruvoyl prosthetic group, which constitutes an essential element of the active site of the mature decarboxylase.

The protein localises to the cell membrane. It carries out the reaction a 1,2-diacyl-sn-glycero-3-phospho-L-serine + H(+) = a 1,2-diacyl-sn-glycero-3-phosphoethanolamine + CO2. It functions in the pathway phospholipid metabolism; phosphatidylethanolamine biosynthesis; phosphatidylethanolamine from CDP-diacylglycerol: step 2/2. Functionally, catalyzes the formation of phosphatidylethanolamine (PtdEtn) from phosphatidylserine (PtdSer). This is Phosphatidylserine decarboxylase proenzyme from Pseudomonas fluorescens (strain Pf0-1).